Reading from the N-terminus, the 590-residue chain is MSQGIITKVSGPLVVAEGLPEAKMFDVVKVGNQGLIGEIIEIRGERVSIQVYEETSGLGPGDPVVSTGEPLSVELGPGMLEGIFDGIQRPLDVIEKKVGSFITRGIDVPSLNREKKWKFTPKVKSGDKVSGGDIIGTVQETVIVEHRIMVPPAISGIVEDIREGEYTVTEPIARIKTDSGQIVEITMMQKWPVRKARPYKEKLPPEIPMPTGQRVIDTLFPVTKGGTACIPGPFGSGKTVVQHQLAKWADAEIVVYIGCGERGNEMTDVLLEFPELKDPKTEEPLMKRTVLIANTSNMPVAAREASIYTGITIAEYFRDMGYSVALMADSTSRWAEALREMSGRLEEMPGEEGYPAYLARRLAEFYERAGRVICLGSDNREGALTVVGAVSPPGGDLSEPVTQATLRVVKVFWALDSELAYARHFPAINWLTSYSLYSDVVEDYMNKNVSSDWGELRSEAMRLLQEEASLQEIVRLVGIDVLSTRDRLVLEVARSIREDFLHQNAFHEVDTYSSMEKQYRMLKLIMIFYQEAQKALEKGVPFSEIEKHPVREKIARAKYVEESKLTVFDEIEKEIKKAMQGLIEGGAADA.

232–239 (GPFGSGKT) lines the ATP pocket.

It belongs to the ATPase alpha/beta chains family.

It catalyses the reaction ATP + H2O + 4 H(+)(in) = ADP + phosphate + 5 H(+)(out). Its function is as follows. Produces ATP from ADP in the presence of a proton gradient across the membrane. The V-type alpha chain is a catalytic subunit. The chain is V-type ATP synthase alpha chain from Thermoanaerobacter sp. (strain X514).